Here is a 194-residue protein sequence, read N- to C-terminus: Dephospho-CoA kinase (194 aa).

The region spanning 3–194 (IVGLTGSIGM…RAIVDDLRAG (192 aa)) is the DPCK domain. 11-16 (GMGKST) serves as a coordination point for ATP.

This sequence belongs to the CoaE family.

It is found in the cytoplasm. It carries out the reaction 3'-dephospho-CoA + ATP = ADP + CoA + H(+). It functions in the pathway cofactor biosynthesis; coenzyme A biosynthesis; CoA from (R)-pantothenate: step 5/5. Functionally, catalyzes the phosphorylation of the 3'-hydroxyl group of dephosphocoenzyme A to form coenzyme A. The chain is Dephospho-CoA kinase from Rhizobium meliloti (strain 1021) (Ensifer meliloti).